Consider the following 329-residue polypeptide: MPRRPLLEFEKPLVELEQQIEQIRQLARDSEVDVTQQLQQLESLASRRRQEIFQGLTPAQKIQVARHPHRPSTLDFIQMFCDDFVELHGDRRGNDDQALIGGVGRLGDRAVLLLGHQKGRDTKENVARNFGMATPGGYRKAMRLMEHADRFRLPILTFIDTPGAYAGLQAEEQGQGEAIAVNLRDMFGLRVPVIATVIGEGGSGGALGIGVADRLLMFEHSVYTVASPEACASILWRDAAKAPDAAAALKITGRDLLELGVVDEVLAEPSGGNNWAPLEAGQTLRAALERHLGELLTLSEQELRDARYTKFRAMGRFAEEMSQEFDDIA.

The CoA carboxyltransferase C-terminal domain occupies 40–294 (QLESLASRRR…RAALERHLGE (255 aa)).

The protein belongs to the AccA family. In terms of assembly, acetyl-CoA carboxylase is a heterohexamer composed of biotin carboxyl carrier protein (AccB), biotin carboxylase (AccC) and two subunits each of ACCase subunit alpha (AccA) and ACCase subunit beta (AccD).

It localises to the cytoplasm. The enzyme catalyses N(6)-carboxybiotinyl-L-lysyl-[protein] + acetyl-CoA = N(6)-biotinyl-L-lysyl-[protein] + malonyl-CoA. It participates in lipid metabolism; malonyl-CoA biosynthesis; malonyl-CoA from acetyl-CoA: step 1/1. Component of the acetyl coenzyme A carboxylase (ACC) complex. First, biotin carboxylase catalyzes the carboxylation of biotin on its carrier protein (BCCP) and then the CO(2) group is transferred by the carboxyltransferase to acetyl-CoA to form malonyl-CoA. This chain is Acetyl-coenzyme A carboxylase carboxyl transferase subunit alpha, found in Synechococcus sp. (strain CC9902).